A 335-amino-acid polypeptide reads, in one-letter code: Anthranilate phosphoribosyltransferase (335 aa).

Residues Gly-79, 82-83 (GD), Ser-87, 89-92 (NIST), 107-115 (KHGNRSITS), and Ser-119 contribute to the 5-phospho-alpha-D-ribose 1-diphosphate site. Residue Gly-79 coordinates anthranilate. Position 91 (Ser-91) interacts with Mg(2+). Asn-110 is an anthranilate binding site. Arg-165 contacts anthranilate. Mg(2+)-binding residues include Asp-224 and Glu-225.

It belongs to the anthranilate phosphoribosyltransferase family. In terms of assembly, homodimer. Mg(2+) is required as a cofactor.

It catalyses the reaction N-(5-phospho-beta-D-ribosyl)anthranilate + diphosphate = 5-phospho-alpha-D-ribose 1-diphosphate + anthranilate. It participates in amino-acid biosynthesis; L-tryptophan biosynthesis; L-tryptophan from chorismate: step 2/5. In terms of biological role, catalyzes the transfer of the phosphoribosyl group of 5-phosphorylribose-1-pyrophosphate (PRPP) to anthranilate to yield N-(5'-phosphoribosyl)-anthranilate (PRA). The protein is Anthranilate phosphoribosyltransferase of Lactococcus lactis subsp. cremoris (strain SK11).